A 157-amino-acid chain; its full sequence is UPF0225 protein PA1039 (157 aa).

It belongs to the UPF0225 family.

This is UPF0225 protein PA1039 from Pseudomonas aeruginosa (strain ATCC 15692 / DSM 22644 / CIP 104116 / JCM 14847 / LMG 12228 / 1C / PRS 101 / PAO1).